We begin with the raw amino-acid sequence, 645 residues long: Dictomallein-like protein (645 aa).

Residues 1 to 13 (MKLSMVMVLLVLA) form the signal peptide. The segment at 19-55 (CGGNDDNNSERTHESGDSNGDVTTPDNDASSNDEDDA) is disordered. Positions 177–448 (PALHPELDLT…QRWVRNRARM (272 aa)) constitute a Peptidase M66 domain. Residue His333 participates in Zn(2+) binding. Glu334 is a catalytic residue. 2 residues coordinate Zn(2+): His337 and His343.

It belongs to the dictomallein family. It depends on Zn(2+) as a cofactor.

The protein resides in the secreted. The chain is Dictomallein-like protein (dtmL) from Hahella chejuensis (strain KCTC 2396).